A 692-amino-acid chain; its full sequence is Polyribonucleotide nucleotidyltransferase (692 aa).

Residues Asp484 and Asp490 each contribute to the Mg(2+) site. The KH domain maps to 551–610 (PRIITIQINPDRIRDVIGPGGKVIRALTEETGATIDIQDNGTVTIASVDGEAGAAAKRRI). The S1 motif domain maps to 620-688 (DTIYDGKVAK…RQGKIKLSMK (69 aa)).

Belongs to the polyribonucleotide nucleotidyltransferase family. Component of the RNA degradosome, which is a multiprotein complex involved in RNA processing and mRNA degradation. Mg(2+) serves as cofactor.

It is found in the cytoplasm. The enzyme catalyses RNA(n+1) + phosphate = RNA(n) + a ribonucleoside 5'-diphosphate. Involved in mRNA degradation. Catalyzes the phosphorolysis of single-stranded polyribonucleotides processively in the 3'- to 5'-direction. This chain is Polyribonucleotide nucleotidyltransferase, found in Acidithiobacillus ferrooxidans (strain ATCC 53993 / BNL-5-31) (Leptospirillum ferrooxidans (ATCC 53993)).